A 255-amino-acid polypeptide reads, in one-letter code: 1-(5-phosphoribosyl)-5-[(5-phosphoribosylamino)methylideneamino] imidazole-4-carboxamide isomerase (255 aa).

D8 functions as the Proton acceptor in the catalytic mechanism. Residue D129 is the Proton donor of the active site.

The protein belongs to the HisA/HisF family.

Its subcellular location is the cytoplasm. The catalysed reaction is 1-(5-phospho-beta-D-ribosyl)-5-[(5-phospho-beta-D-ribosylamino)methylideneamino]imidazole-4-carboxamide = 5-[(5-phospho-1-deoxy-D-ribulos-1-ylimino)methylamino]-1-(5-phospho-beta-D-ribosyl)imidazole-4-carboxamide. It functions in the pathway amino-acid biosynthesis; L-histidine biosynthesis; L-histidine from 5-phospho-alpha-D-ribose 1-diphosphate: step 4/9. This Prochlorococcus marinus (strain MIT 9312) protein is 1-(5-phosphoribosyl)-5-[(5-phosphoribosylamino)methylideneamino] imidazole-4-carboxamide isomerase.